A 301-amino-acid polypeptide reads, in one-letter code: POU domain, class 6, transcription factor 1 (301 aa).

Repeat copies occupy residues 11–17 (NAQGQVI) and 50–56 (NAQGQVI). The 2 X 7 AA repeats of N-A-Q-G-Q-V-I stretch occupies residues 11–56 (NAQGQVIGALPWVVNSASVATPAPAQSLQVQAVTPQLLLNAQGQVI). Residues 66-88 (QPVAVRKPSTPESPAKSEVQPIQ) are disordered. The region spanning 139–213 (EDGINLEEIR…VLEKWLNEAE (75 aa)) is the POU-specific domain. The segment at residues 234–293 (KRKRRTSFTPQAIEALNAYFEKNPLPTGQEITEIAKELNYDREVVRVWFCNRRQTLKNTS) is a DNA-binding region (homeobox).

It belongs to the POU transcription factor family. Class-6 subfamily. In the embryo, widely expressed, with highest levels in the developing brain and spinal cord. In the adult, mostly found in the brain, where it is diffusely expressed with the exception of an enrichment in layer IV of the neocortex. Also found in kidney, lung, heart, adrenal, skin, and placenta. Low levels in spleen, muscle, liver, anterior pituitary, testis and ovary.

Its subcellular location is the nucleus. Transcription factor that binds preferentially to a variant of the octamer motif (5'-ATGATAAT-3'). In Rattus norvegicus (Rat), this protein is POU domain, class 6, transcription factor 1 (Pou6f1).